We begin with the raw amino-acid sequence, 536 residues long: Arylsulfatase K (536 aa).

Positions 1–22 are cleaved as a signal peptide; that stretch reads MLLLWVSVVAALALAVLAPGAG. The Ca(2+) site is built by aspartate 40 and cysteine 80. Cysteine 80 functions as the Nucleophile in the catalytic mechanism. Cysteine 80 is subject to 3-oxoalanine (Cys). N-linked (GlcNAc...) asparagine glycosylation is present at asparagine 108. Lysine 128 is a binding site for substrate. Residues asparagine 166 and asparagine 193 are each glycosylated (N-linked (GlcNAc...) asparagine). Substrate is bound at residue histidine 251. An N-linked (GlcNAc...) asparagine glycan is attached at asparagine 262. Ca(2+) contacts are provided by aspartate 313 and histidine 314. Residues asparagine 375, asparagine 413, and asparagine 498 are each glycosylated (N-linked (GlcNAc...) asparagine).

It belongs to the sulfatase family. Ca(2+) is required as a cofactor. The conversion to 3-oxoalanine (also known as C-formylglycine, FGly), of a serine or cysteine residue in prokaryotes and of a cysteine residue in eukaryotes, is critical for catalytic activity. In terms of processing, the 75-kDa precursor undergoes proteolytic processing to yield a 23 kDa form. Post-translationally, N-glycosylated with both high mannose and complex type sugars. In terms of tissue distribution, expressed at high levels in the placenta and pancreas. Expressed at intermediate levels in the lung, brain, heart, liver and kidney and at low levels in the muscle.

It is found in the secreted. Its subcellular location is the lysosome. It carries out the reaction an aryl sulfate + H2O = a phenol + sulfate + H(+). It catalyses the reaction Hydrolysis of the 2-sulfate groups of the 2-O-sulfo-D-glucuronate residues of chondroitin sulfate, heparin and heparitin sulfate.. Functionally, catalyzes the hydrolysis of pseudosubstrates such as p-nitrocatechol sulfate and p-nitrophenyl sulfate. Catalyzes the hydrolysis of the 2-sulfate groups of the 2-O-sulfo-D-glucuronate residues of chondroitin sulfate, heparin and heparitin sulfate. Acts selectively on 2-sulfoglucuronate and lacks activity against 2-sulfoiduronate. In Homo sapiens (Human), this protein is Arylsulfatase K (ARSK).